A 1305-amino-acid polypeptide reads, in one-letter code: Contactin-associated protein-like 5 (1305 aa).

Residues M1–S24 form the signal peptide. The Extracellular portion of the chain corresponds to A25–S1236. An F5/8 type C domain is found at C30–C174. Residues C30 and C174 are joined by a disulfide bond. Laminin G-like domains lie at V180–C360 and P367–C544. N-linked (GlcNAc...) asparagine glycosylation is found at N282, N355, and N496. Cysteines 329 and 360 form a disulfide. Disulfide bonds link C512–C544, C550–C561, C555–C570, and C572–C582. The region spanning I546–H583 is the EGF-like 1 domain. The region spanning N584–W790 is the Fibrinogen C-terminal domain. An N-linked (GlcNAc...) asparagine glycan is attached at N622. In terms of domain architecture, Laminin G-like 3 spans N791 to C956. Disulfide bonds link C929/C956, C960/C973, C967/C982, C984/C994, and C1163/C1198. One can recognise an EGF-like 2 domain in the interval P957–K995. Residues A1000–C1198 enclose the Laminin G-like 4 domain. A helical transmembrane segment spans residues A1237–M1257. The Cytoplasmic segment spans residues T1258–I1305.

The protein belongs to the neurexin family.

It localises to the membrane. Functionally, may play a role in the correct development and proper functioning of the peripheral and central nervous system and be involved in cell adhesion and intercellular communication. The polypeptide is Contactin-associated protein-like 5 (CNTNAP5) (Canis lupus familiaris (Dog)).